A 1225-amino-acid chain; its full sequence is DNA-directed RNA polymerase subunit beta' (1225 aa).

Zn(2+) contacts are provided by cysteine 60, cysteine 62, cysteine 75, and cysteine 78. Mg(2+) is bound by residues aspartate 450, aspartate 452, and aspartate 454. Residues cysteine 818, cysteine 892, cysteine 899, and cysteine 902 each contribute to the Zn(2+) site.

The protein belongs to the RNA polymerase beta' chain family. As to quaternary structure, the RNAP catalytic core consists of 2 alpha, 1 beta, 1 beta' and 1 omega subunit. When a sigma factor is associated with the core the holoenzyme is formed, which can initiate transcription. Mg(2+) serves as cofactor. Zn(2+) is required as a cofactor.

The catalysed reaction is RNA(n) + a ribonucleoside 5'-triphosphate = RNA(n+1) + diphosphate. In terms of biological role, DNA-dependent RNA polymerase catalyzes the transcription of DNA into RNA using the four ribonucleoside triphosphates as substrates. The sequence is that of DNA-directed RNA polymerase subunit beta' from Streptococcus pneumoniae (strain P1031).